A 410-amino-acid chain; its full sequence is Dipeptidase 1 (410 aa).

The signal sequence occupies residues 1–16 (MWTGWWLWPLVAVCTA). 2 residues coordinate Zn(2+): His-36 and Asp-38. N-linked (GlcNAc...) asparagine glycans are attached at residues Asn-57 and Asn-62. Cys-87 and Cys-170 are disulfide-bonded. Glu-141 serves as a coordination point for Zn(2+). His-168 serves as a coordination point for substrate. The Zn(2+) site is built by His-214 and His-235. The cysteines at positions 242 and 274 are disulfide-linked. Arg-246 is a binding site for substrate. N-linked (GlcNAc...) asparagine glycosylation occurs at Asn-279. Asp-304 is a substrate binding site. Residue Ser-384 is the site of GPI-anchor amidated serine attachment. A propeptide spans 385–410 (GAPSLHLQPGTLLASLVTLLLSLCLL) (removed in mature form).

It belongs to the metallo-dependent hydrolases superfamily. Peptidase M19 family. As to quaternary structure, homodimer; disulfide-linked. The cofactor is Zn(2+).

The protein localises to the apical cell membrane. It carries out the reaction an L-aminoacyl-L-amino acid + H2O = 2 an L-alpha-amino acid. The enzyme catalyses leukotriene D4 + H2O = leukotriene E4 + glycine. The catalysed reaction is L-cystine-bis-glycine + 2 H2O = L-cystine + 2 glycine. It catalyses the reaction a beta-lactam + H2O = a substituted beta-amino acid. It carries out the reaction glycyldehydrophenylalanine + H2O = 2,3-didehydrophenylalanine + glycine. Its activity is regulated as follows. Inhibited by L-penicillamine. Inhibited by cilastatin. Its function is as follows. Hydrolyzes a wide range of dipeptides including the conversion of leukotriene D4 to leukotriene E4. Hydrolyzes cystinyl-bis-glycine (cys-bis-gly) formed during glutathione degradation. Also possesses beta lactamase activity and hydrolytically inactivates beta-lactam antibiotics. Independently of its dipeptidase activity, acts as an adhesion receptor for neutrophil recruitment from bloodstream into inflamed lungs and liver. This is Dipeptidase 1 (DPEP1) from Bos taurus (Bovine).